Reading from the N-terminus, the 443-residue chain is MKRTEIQQLLNEYPLVKNLMELEEIFWFNPCNTTLKEGLPFVGLGADDVEDAEARLDRFASYLCKAFPETAVTHGIIESEIVAIPTMQKTLEQHYGVGITGRILLKKDSHLPISGSIKARGGIYEVLTHAEKLALQAGLLAENDDYSKLFSEELRRFFNQYSIAVGSTGNLGLSIGIASAKLGFNVSVHMSADAREWKKQKLRSHGVNVVEHELDYGVAVARGRKEAESAPNCFFIDDENSQTLFLGYSVAGGRVKAQFEQMNIVVDEDHPLFVYLPCGVGGGPGGVAFGLKLAFGDHVHCIFAEPTHSPSMLLGVYTGLHDNICVQDIGIDNITAADGLAVGRASGFVGRAMERLLDGFYTVQDQEMYNLLGLLDRDEGIRLEPSALVGMAGPARVSGNLDYLNNKNLSAEKMKQATHLVWATGGGMVPDDEMTKYLATAKI.

The residue at position 118 (Lys118) is an N6-(pyridoxal phosphate)lysine.

This sequence belongs to the serine/threonine dehydratase family. DsdA subfamily. As to quaternary structure, monomer. Pyridoxal 5'-phosphate is required as a cofactor.

It catalyses the reaction D-serine = pyruvate + NH4(+). The polypeptide is D-serine dehydratase (Photorhabdus laumondii subsp. laumondii (strain DSM 15139 / CIP 105565 / TT01) (Photorhabdus luminescens subsp. laumondii)).